The sequence spans 421 residues: Probable G-protein coupled receptor 151 (421 aa).

Residues 1 to 44 (MGKATLAVFADSDSSNMNESFAHLHFAGGYLPSDSKGWRTIIPS) are Extracellular-facing. N18 is a glycosylation site (N-linked (GlcNAc...) asparagine). The chain crosses the membrane as a helical span at residues 45 to 65 (LLAAVCLVGFVGNLCVIGLLL). Topologically, residues 66 to 74 (HGVWKRKPS) are cytoplasmic. Residues 75–95 (MIHSLILNLSLADISLLLFSA) traverse the membrane as a helical segment. At 96 to 122 (PVRATAYVKGVWDLGWFVCKSSDWFTH) the chain is on the extracellular side. Cysteines 114 and 190 form a disulfide. A helical transmembrane segment spans residues 123–143 (MCMAAKSLTFVVVAKVCFMYA). The Cytoplasmic portion of the chain corresponds to 144–156 (SDPAKPVGTHNCT). A helical membrane pass occupies residues 157–177 (IWSLLGAIWVVASLLPLPEWF). Topologically, residues 178–204 (FSTTRHHAGVEMCLVDVPAVAAEFMSL) are extracellular. Residues 205–225 (FGKLYPLLVFCLPLLLAGFYF) form a helical membrane-spanning segment. Residues 226–258 (WRAYNQCKIRCAKTQNLRNQMRSKQLTVMLLST) lie on the Cytoplasmic side of the membrane. Residues 259–279 (AVTSALLWLPEWIAWLWVWHL) form a helical membrane-spanning segment. Residues 280–289 (KAGGPMPPQG) are Extracellular-facing. The helical transmembrane segment at 290–310 (FIALSQVLMFSISTVNPLIFL) threads the bilayer. Residues 311-421 (MMSEEFKAGL…HEGQETKGCN (111 aa)) lie on the Cytoplasmic side of the membrane. Disordered regions lie at residues 346–381 (IETL…TDKV) and 394–421 (HERD…KGCN). Basic and acidic residues-rich tracts occupy residues 364–379 (DTDR…ETTD) and 409–421 (PWEH…KGCN).

Belongs to the G-protein coupled receptor 1 family. As to expression, exclusively expressed in neurons of the habenular complex. The expression is particularly prominent in the medial habenular nucleus, whereas the lateral habenular nucleus exhibited a lower level of expression.

The protein resides in the cell membrane. In terms of biological role, orphan receptor. The protein is Probable G-protein coupled receptor 151 (Gpr151) of Rattus norvegicus (Rat).